A 340-amino-acid chain; its full sequence is Deubiquitinase SseL (340 aa).

His223 is a catalytic residue. The active-site Nucleophile is the Cys285.

It belongs to the peptidase C79 family.

Its subcellular location is the secreted. It is found in the host cytoplasm. Functionally, effector proteins function to alter host cell physiology and promote bacterial survival in host tissues. This protease targets the host cell ubiquitin pathway by acting as a deubiquitinase in infected host cells. The polypeptide is Deubiquitinase SseL (sseL) (Salmonella paratyphi A (strain ATCC 9150 / SARB42)).